The following is a 327-amino-acid chain: Undecaprenyl-phosphate 4-deoxy-4-formamido-L-arabinose transferase (327 aa).

A run of 2 helical transmembrane segments spans residues 235-255 (LLSLVGSAIALLGFTFSVLLV) and 270-290 (VFTLFAVLFMFIGAQFVGMGL).

The protein belongs to the glycosyltransferase 2 family.

It is found in the cell inner membrane. The catalysed reaction is UDP-4-deoxy-4-formamido-beta-L-arabinose + di-trans,octa-cis-undecaprenyl phosphate = 4-deoxy-4-formamido-alpha-L-arabinopyranosyl di-trans,octa-cis-undecaprenyl phosphate + UDP. It functions in the pathway glycolipid biosynthesis; 4-amino-4-deoxy-alpha-L-arabinose undecaprenyl phosphate biosynthesis; 4-amino-4-deoxy-alpha-L-arabinose undecaprenyl phosphate from UDP-4-deoxy-4-formamido-beta-L-arabinose and undecaprenyl phosphate: step 1/2. Its pathway is bacterial outer membrane biogenesis; lipopolysaccharide biosynthesis. In terms of biological role, catalyzes the transfer of 4-deoxy-4-formamido-L-arabinose from UDP to undecaprenyl phosphate. The modified arabinose is attached to lipid A and is required for resistance to polymyxin and cationic antimicrobial peptides. The sequence is that of Undecaprenyl-phosphate 4-deoxy-4-formamido-L-arabinose transferase from Yersinia pseudotuberculosis serotype IB (strain PB1/+).